Consider the following 377-residue polypeptide: Peptide chain release factor 2 (377 aa).

An N5-methylglutamine modification is found at Gln257.

It belongs to the prokaryotic/mitochondrial release factor family. Post-translationally, methylated by PrmC. Methylation increases the termination efficiency of RF2.

The protein localises to the cytoplasm. In terms of biological role, peptide chain release factor 2 directs the termination of translation in response to the peptide chain termination codons UGA and UAA. The protein is Peptide chain release factor 2 of Lactiplantibacillus plantarum (strain ATCC BAA-793 / NCIMB 8826 / WCFS1) (Lactobacillus plantarum).